Here is a 181-residue protein sequence, read N- to C-terminus: Adenine phosphoribosyltransferase (181 aa).

Belongs to the purine/pyrimidine phosphoribosyltransferase family. Homodimer.

The protein localises to the cytoplasm. It catalyses the reaction AMP + diphosphate = 5-phospho-alpha-D-ribose 1-diphosphate + adenine. Its pathway is purine metabolism; AMP biosynthesis via salvage pathway; AMP from adenine: step 1/1. Catalyzes a salvage reaction resulting in the formation of AMP, that is energically less costly than de novo synthesis. The polypeptide is Adenine phosphoribosyltransferase (Brucella suis (strain ATCC 23445 / NCTC 10510)).